The sequence spans 315 residues: Protein translocase subunit SecF (315 aa).

6 helical membrane-spanning segments follow: residues 12–32 (AWIVSSLLVLISIFAMAISWA), 136–156 (ALFRSGVLALVISLLGIIIYL), 166–186 (VFAIIALLYDALITMGAFAIF), 188–208 (LVGGVEVDSLFLVALLTIIGF), 247–267 (SINTSLTTSLPLVAIFLFGGD), and 271–291 (FFALALIIGFASGVYSSIFMA).

It belongs to the SecD/SecF family. SecF subfamily. In terms of assembly, forms a complex with SecD. Part of the essential Sec protein translocation apparatus which comprises SecA, SecYEG and auxiliary proteins SecDF. Other proteins may also be involved.

It is found in the cell inner membrane. Functionally, part of the Sec protein translocase complex. Interacts with the SecYEG preprotein conducting channel. SecDF uses the proton motive force (PMF) to complete protein translocation after the ATP-dependent function of SecA. In terms of biological role, probably participates in protein translocation into and across both the cytoplasmic and thylakoid membranes in cyanobacterial cells. The sequence is that of Protein translocase subunit SecF from Synechocystis sp. (strain ATCC 27184 / PCC 6803 / Kazusa).